The primary structure comprises 315 residues: Olfactory receptor 2V2 (315 aa).

At 1–26 (METWVNQSYTDGFFLLGIFSHSTADL) the chain is on the extracellular side. A glycan (N-linked (GlcNAc...) asparagine) is linked at Asn-6. The helical transmembrane segment at 27-50 (VLFSVVMAVFTVALCGNVLLIFLI) threads the bilayer. At 51-58 (YMDPHLHT) the chain is on the cytoplasmic side. Residues 59 to 80 (PMYFFLSQLSLMDLMLVCTNVP) form a helical membrane-spanning segment. Residues 81-101 (KMAANFLSGRKSISFVGCGIQ) are Extracellular-facing. A disulfide bond links Cys-98 and Cys-190. A helical membrane pass occupies residues 102–121 (IGLFVCLVGSEGLLLGLMAY). Residues 122 to 140 (DRYVAISHPLHYPILMNQR) are Cytoplasmic-facing. Residues 141-159 (VCLQITGSSWAFGIIDGLI) form a helical membrane-spanning segment. At 160–196 (QMVVVMNFPYCGLRKVNHFFCEMLSLLKLACVDTSLF) the chain is on the extracellular side. Residues 197–220 (EKVIFACCVFMLLFPFSIIVASYA) form a helical membrane-spanning segment. Over 221–237 (HILGTVLQMHSAQAWKK) the chain is Cytoplasmic. Residues 238 to 260 (ALATCSSHLTAVTLFYGAAMFIY) form a helical membrane-spanning segment. Residues 261–273 (LRPRHYRAPSHDK) are Extracellular-facing. Residues 274–293 (VASIFYTVLTPMLNPLIYSL) form a helical membrane-spanning segment. The Cytoplasmic portion of the chain corresponds to 294-315 (RNREVMGALRKGLDRCRIGSQH).

The protein belongs to the G-protein coupled receptor 1 family.

It is found in the cell membrane. In terms of biological role, odorant receptor. This chain is Olfactory receptor 2V2 (OR2V2), found in Homo sapiens (Human).